The chain runs to 218 residues: Thiamine-phosphate synthase (218 aa).

4-amino-2-methyl-5-(diphosphooxymethyl)pyrimidine-binding positions include 43–47 (QFRDK) and asparagine 78. Mg(2+) contacts are provided by aspartate 79 and aspartate 98. Serine 117 contributes to the 4-amino-2-methyl-5-(diphosphooxymethyl)pyrimidine binding site. 143-145 (TNS) contacts 2-[(2R,5Z)-2-carboxy-4-methylthiazol-5(2H)-ylidene]ethyl phosphate. Lysine 146 contacts 4-amino-2-methyl-5-(diphosphooxymethyl)pyrimidine. Residues glycine 174 and 194 to 195 (IS) contribute to the 2-[(2R,5Z)-2-carboxy-4-methylthiazol-5(2H)-ylidene]ethyl phosphate site.

This sequence belongs to the thiamine-phosphate synthase family. Mg(2+) is required as a cofactor.

It carries out the reaction 2-[(2R,5Z)-2-carboxy-4-methylthiazol-5(2H)-ylidene]ethyl phosphate + 4-amino-2-methyl-5-(diphosphooxymethyl)pyrimidine + 2 H(+) = thiamine phosphate + CO2 + diphosphate. The catalysed reaction is 2-(2-carboxy-4-methylthiazol-5-yl)ethyl phosphate + 4-amino-2-methyl-5-(diphosphooxymethyl)pyrimidine + 2 H(+) = thiamine phosphate + CO2 + diphosphate. It catalyses the reaction 4-methyl-5-(2-phosphooxyethyl)-thiazole + 4-amino-2-methyl-5-(diphosphooxymethyl)pyrimidine + H(+) = thiamine phosphate + diphosphate. Its pathway is cofactor biosynthesis; thiamine diphosphate biosynthesis; thiamine phosphate from 4-amino-2-methyl-5-diphosphomethylpyrimidine and 4-methyl-5-(2-phosphoethyl)-thiazole: step 1/1. In terms of biological role, condenses 4-methyl-5-(beta-hydroxyethyl)thiazole monophosphate (THZ-P) and 2-methyl-4-amino-5-hydroxymethyl pyrimidine pyrophosphate (HMP-PP) to form thiamine monophosphate (TMP). The protein is Thiamine-phosphate synthase of Lactococcus lactis subsp. cremoris (strain MG1363).